We begin with the raw amino-acid sequence, 118 residues long: Small ribosomal subunit protein uS13 (118 aa).

The tract at residues 94-118 (GLPLRGQRTKTNARTRKGPRKPIRK) is disordered.

Belongs to the universal ribosomal protein uS13 family. As to quaternary structure, part of the 30S ribosomal subunit. Forms a loose heterodimer with protein S19. Forms two bridges to the 50S subunit in the 70S ribosome.

In terms of biological role, located at the top of the head of the 30S subunit, it contacts several helices of the 16S rRNA. In the 70S ribosome it contacts the 23S rRNA (bridge B1a) and protein L5 of the 50S subunit (bridge B1b), connecting the 2 subunits; these bridges are implicated in subunit movement. Contacts the tRNAs in the A and P-sites. This is Small ribosomal subunit protein uS13 from Alcanivorax borkumensis (strain ATCC 700651 / DSM 11573 / NCIMB 13689 / SK2).